The following is a 107-amino-acid chain: MTFVVTDNCIKCKYTDCVEVCPVDCFYEGPNFLVIHPDECIDCALCEPECPAQAIFSEDEVPENMQEFIELNSELAEVWPNITEKKDALPDAEEWDGVAGKLQHLER.

4Fe-4S ferredoxin-type domains lie at 2–30 (TFVV…YEGP) and 31–60 (NFLV…SEDE). [3Fe-4S] cluster is bound by residues Cys-9 and Cys-17. [4Fe-4S] cluster contacts are provided by Cys-21, Cys-40, Cys-43, and Cys-46. Residue Cys-50 participates in [3Fe-4S] cluster binding.

Requires [4Fe-4S] cluster as cofactor. [3Fe-4S] cluster serves as cofactor.

Functionally, ferredoxins are iron-sulfur proteins that transfer electrons in a wide variety of metabolic reactions. The chain is Ferredoxin 1 (fdxA) from Pseudomonas aeruginosa (strain ATCC 15692 / DSM 22644 / CIP 104116 / JCM 14847 / LMG 12228 / 1C / PRS 101 / PAO1).